A 491-amino-acid polypeptide reads, in one-letter code: Glycogen synthase (491 aa).

Arginine 20 is an ADP-alpha-D-glucose binding site.

The protein belongs to the glycosyltransferase 1 family. Bacterial/plant glycogen synthase subfamily.

The enzyme catalyses [(1-&gt;4)-alpha-D-glucosyl](n) + ADP-alpha-D-glucose = [(1-&gt;4)-alpha-D-glucosyl](n+1) + ADP + H(+). Its pathway is glycan biosynthesis; glycogen biosynthesis. Functionally, synthesizes alpha-1,4-glucan chains using ADP-glucose. The chain is Glycogen synthase from Prosthecochloris aestuarii (strain DSM 271 / SK 413).